The chain runs to 330 residues: Lipoyl synthase (330 aa).

[4Fe-4S] cluster is bound by residues Cys55, Cys60, Cys66, Cys81, Cys85, Cys88, and Ser292. The Radical SAM core domain occupies 67–281 (WEDREATFLI…AEEAREIGFV (215 aa)).

The protein belongs to the radical SAM superfamily. Lipoyl synthase family. The cofactor is [4Fe-4S] cluster.

It localises to the cytoplasm. It catalyses the reaction [[Fe-S] cluster scaffold protein carrying a second [4Fe-4S](2+) cluster] + N(6)-octanoyl-L-lysyl-[protein] + 2 oxidized [2Fe-2S]-[ferredoxin] + 2 S-adenosyl-L-methionine + 4 H(+) = [[Fe-S] cluster scaffold protein] + N(6)-[(R)-dihydrolipoyl]-L-lysyl-[protein] + 4 Fe(3+) + 2 hydrogen sulfide + 2 5'-deoxyadenosine + 2 L-methionine + 2 reduced [2Fe-2S]-[ferredoxin]. Its pathway is protein modification; protein lipoylation via endogenous pathway; protein N(6)-(lipoyl)lysine from octanoyl-[acyl-carrier-protein]: step 2/2. In terms of biological role, catalyzes the radical-mediated insertion of two sulfur atoms into the C-6 and C-8 positions of the octanoyl moiety bound to the lipoyl domains of lipoate-dependent enzymes, thereby converting the octanoylated domains into lipoylated derivatives. The protein is Lipoyl synthase of Cutibacterium acnes (strain DSM 16379 / KPA171202) (Propionibacterium acnes).